A 158-amino-acid chain; its full sequence is Small ribosomal subunit protein uS9 (158 aa).

This sequence belongs to the universal ribosomal protein uS9 family.

This Brucella melitensis biotype 1 (strain ATCC 23456 / CCUG 17765 / NCTC 10094 / 16M) protein is Small ribosomal subunit protein uS9.